A 385-amino-acid polypeptide reads, in one-letter code: 8-amino-7-oxononanoate synthase (385 aa).

Arginine 21 is a substrate binding site. Residue 108–109 (GY) coordinates pyridoxal 5'-phosphate. Histidine 133 is a substrate binding site. Serine 179, histidine 207, and threonine 233 together coordinate pyridoxal 5'-phosphate. Lysine 236 is modified (N6-(pyridoxal phosphate)lysine). Threonine 350 provides a ligand contact to substrate.

Belongs to the class-II pyridoxal-phosphate-dependent aminotransferase family. BioF subfamily. As to quaternary structure, homodimer. Pyridoxal 5'-phosphate is required as a cofactor.

It catalyses the reaction 6-carboxyhexanoyl-[ACP] + L-alanine + H(+) = (8S)-8-amino-7-oxononanoate + holo-[ACP] + CO2. Its pathway is cofactor biosynthesis; biotin biosynthesis. Catalyzes the decarboxylative condensation of pimeloyl-[acyl-carrier protein] and L-alanine to produce 8-amino-7-oxononanoate (AON), [acyl-carrier protein], and carbon dioxide. This chain is 8-amino-7-oxononanoate synthase, found in Pectobacterium atrosepticum (strain SCRI 1043 / ATCC BAA-672) (Erwinia carotovora subsp. atroseptica).